Consider the following 597-residue polypeptide: Elongation factor 4 (597 aa).

The tr-type G domain maps to Lys-2–Lys-184. Residues Asp-14–Thr-19 and Asn-131–Asp-134 each bind GTP.

This sequence belongs to the TRAFAC class translation factor GTPase superfamily. Classic translation factor GTPase family. LepA subfamily.

The protein resides in the cell inner membrane. It catalyses the reaction GTP + H2O = GDP + phosphate + H(+). Required for accurate and efficient protein synthesis under certain stress conditions. May act as a fidelity factor of the translation reaction, by catalyzing a one-codon backward translocation of tRNAs on improperly translocated ribosomes. Back-translocation proceeds from a post-translocation (POST) complex to a pre-translocation (PRE) complex, thus giving elongation factor G a second chance to translocate the tRNAs correctly. Binds to ribosomes in a GTP-dependent manner. This is Elongation factor 4 from Laribacter hongkongensis (strain HLHK9).